A 359-amino-acid polypeptide reads, in one-letter code: 3-dehydroquinate synthase (359 aa).

NAD(+)-binding positions include 72–77, 106–110, 130–131, Lys-143, Lys-152, and 170–173; these read EGEIHK, GVIGD, TS, and CLKT. Zn(2+) contacts are provided by Glu-185, His-248, and His-264.

This sequence belongs to the sugar phosphate cyclases superfamily. Dehydroquinate synthase family. Co(2+) serves as cofactor. Zn(2+) is required as a cofactor. Requires NAD(+) as cofactor.

It localises to the cytoplasm. The enzyme catalyses 7-phospho-2-dehydro-3-deoxy-D-arabino-heptonate = 3-dehydroquinate + phosphate. The protein operates within metabolic intermediate biosynthesis; chorismate biosynthesis; chorismate from D-erythrose 4-phosphate and phosphoenolpyruvate: step 2/7. In terms of biological role, catalyzes the conversion of 3-deoxy-D-arabino-heptulosonate 7-phosphate (DAHP) to dehydroquinate (DHQ). This chain is 3-dehydroquinate synthase, found in Dehalococcoides mccartyi (strain ATCC BAA-2100 / JCM 16839 / KCTC 5957 / BAV1).